The following is a 422-amino-acid chain: Adenylosuccinate synthetase (422 aa).

GTP-binding positions include glycine 11–lysine 17 and glycine 39–threonine 41. Aspartate 12 (proton acceptor) is an active-site residue. Positions 12 and 39 each coordinate Mg(2+). IMP-binding positions include aspartate 12 to lysine 15, asparagine 37 to histidine 40, threonine 129, arginine 143, asparagine 219, threonine 234, and arginine 298. Residue histidine 40 is the Proton donor of the active site. Valine 294–arginine 300 is a binding site for substrate. GTP is bound by residues arginine 300, lysine 326–aspartate 328, and glycine 409–glycine 411.

The protein belongs to the adenylosuccinate synthetase family. Homodimer. The cofactor is Mg(2+).

The protein localises to the cytoplasm. The catalysed reaction is IMP + L-aspartate + GTP = N(6)-(1,2-dicarboxyethyl)-AMP + GDP + phosphate + 2 H(+). Its pathway is purine metabolism; AMP biosynthesis via de novo pathway; AMP from IMP: step 1/2. Its function is as follows. Plays an important role in the de novo pathway and in the salvage pathway of purine nucleotide biosynthesis. Catalyzes the first committed step in the biosynthesis of AMP from IMP. This Blastomyces gilchristii (strain SLH14081) (Blastomyces dermatitidis) protein is Adenylosuccinate synthetase.